We begin with the raw amino-acid sequence, 109 residues long: UPF0235 protein MA_4097 (109 aa).

The protein belongs to the UPF0235 family.

The protein is UPF0235 protein MA_4097 of Methanosarcina acetivorans (strain ATCC 35395 / DSM 2834 / JCM 12185 / C2A).